The chain runs to 611 residues: Dihydroxy-acid dehydratase (611 aa).

Residue D81 coordinates Mg(2+). Residue C122 coordinates [2Fe-2S] cluster. Positions 123 and 124 each coordinate Mg(2+). K124 bears the N6-carboxylysine mark. C195 is a binding site for [2Fe-2S] cluster. Position 491 (E491) interacts with Mg(2+). Residue S517 is the Proton acceptor of the active site.

The protein belongs to the IlvD/Edd family. Homodimer. The cofactor is [2Fe-2S] cluster. Mg(2+) is required as a cofactor.

The catalysed reaction is (2R)-2,3-dihydroxy-3-methylbutanoate = 3-methyl-2-oxobutanoate + H2O. The enzyme catalyses (2R,3R)-2,3-dihydroxy-3-methylpentanoate = (S)-3-methyl-2-oxopentanoate + H2O. Its pathway is amino-acid biosynthesis; L-isoleucine biosynthesis; L-isoleucine from 2-oxobutanoate: step 3/4. The protein operates within amino-acid biosynthesis; L-valine biosynthesis; L-valine from pyruvate: step 3/4. Functions in the biosynthesis of branched-chain amino acids. Catalyzes the dehydration of (2R,3R)-2,3-dihydroxy-3-methylpentanoate (2,3-dihydroxy-3-methylvalerate) into 2-oxo-3-methylpentanoate (2-oxo-3-methylvalerate) and of (2R)-2,3-dihydroxy-3-methylbutanoate (2,3-dihydroxyisovalerate) into 2-oxo-3-methylbutanoate (2-oxoisovalerate), the penultimate precursor to L-isoleucine and L-valine, respectively. The polypeptide is Dihydroxy-acid dehydratase (Glaesserella parasuis serovar 5 (strain SH0165) (Haemophilus parasuis)).